Here is a 257-residue protein sequence, read N- to C-terminus: Hydroxyacylglutathione hydrolase (257 aa).

Zn(2+)-binding residues include His54, His56, Asp58, His59, His109, Asp129, and His167.

It belongs to the metallo-beta-lactamase superfamily. Glyoxalase II family. In terms of assembly, monomer. Zn(2+) serves as cofactor.

It catalyses the reaction an S-(2-hydroxyacyl)glutathione + H2O = a 2-hydroxy carboxylate + glutathione + H(+). It participates in secondary metabolite metabolism; methylglyoxal degradation; (R)-lactate from methylglyoxal: step 2/2. In terms of biological role, thiolesterase that catalyzes the hydrolysis of S-D-lactoyl-glutathione to form glutathione and D-lactic acid. This chain is Hydroxyacylglutathione hydrolase, found in Marinomonas sp. (strain MWYL1).